A 389-amino-acid polypeptide reads, in one-letter code: Krueppel-like factor 17 (389 aa).

Disordered stretches follow at residues 1-48 (MYGR…SGVH) and 239-279 (LVSQ…GSSE). The segment covering 26 to 38 (AQDNENSAPILNM) has biased composition (polar residues). Positions 264–278 (KNSRPQEGTGRRGSS) are enriched in basic and acidic residues. C2H2-type zinc fingers lie at residues 283 to 307 (YCCN…QRKH), 313 to 337 (YSCN…MRVH), and 343 to 365 (YKCD…QKTH). The tract at residues 356 to 389 (DHLKQHQKTHRPGPSDPQANNNNGEQDSPPAAGP) is disordered. Over residues 372–381 (PQANNNNGEQ) the composition is skewed to polar residues.

This sequence belongs to the Sp1 C2H2-type zinc-finger protein family.

It localises to the nucleus. Its function is as follows. Transcription repressor that binds to the promoter of target genes and prevents their expression. Acts as a negative regulator of epithelial-mesenchymal transition and metastasis in breast cancer. Specifically binds the 5'-CACCC-3' sequence in the promoter of ID1, a key metastasis regulator in breast cancer, and repress its expression. May be a germ cell-specific transcription factor that plays important roles in spermatid differentiation and oocyte development. This chain is Krueppel-like factor 17 (KLF17), found in Homo sapiens (Human).